The primary structure comprises 320 residues: D-alanine--D-alanine ligase (320 aa).

One can recognise an ATP-grasp domain in the interval 120–314 (SSWFFANSIN…FTNLIAEIIK (195 aa)). 147-198 (MKRPYVIKPLTQGSSIGVEVIFEEDDFNFADYDFPYGDQVVIERYIKGREFQ) is an ATP binding site. Mg(2+)-binding residues include Glu-267, Glu-281, and Asn-283.

The protein belongs to the D-alanine--D-alanine ligase family. Requires Mg(2+) as cofactor. Mn(2+) is required as a cofactor.

It is found in the cytoplasm. It carries out the reaction 2 D-alanine + ATP = D-alanyl-D-alanine + ADP + phosphate + H(+). The protein operates within cell wall biogenesis; peptidoglycan biosynthesis. In terms of biological role, cell wall formation. The protein is D-alanine--D-alanine ligase of Rickettsia akari (strain Hartford).